A 446-amino-acid polypeptide reads, in one-letter code: Nuclear distribution protein PAC1-1 (446 aa).

Residues 9-41 (QAEELHKSLIAYLSSINASQSVTTLREELQIGD) form the LisH domain. Residues 60 to 86 (ISVVRLQKRILDLESKIASLQAELDSA) are a coiled coil. 8 WD repeats span residues 112–153 (SHRG…RTLK), 155–195 (HTRT…ANIR), 199–239 (GHDH…CVKT), 242–281 (TQGD…ARAS), 284–344 (GHEN…IKTL), 346–385 (GHNN…KLVK), 390–430 (AHEH…TGFR), and 432–446 (VIAT…RVFM).

Belongs to the WD repeat LIS1/nudF family. As to quaternary structure, self-associates. Interacts with NDL1 and dynein.

It localises to the cytoplasm. Its subcellular location is the cytoskeleton. The protein resides in the spindle pole. Functionally, positively regulates the activity of the minus-end directed microtubule motor protein dynein. May enhance dynein-mediated microtubule sliding by targeting dynein to the microtubule plus end. Required for nuclear migration during vegetative growth as well as development. Required for retrograde early endosome (EE) transport from the hyphal tip. Required for localization of dynein to the mitotic spindle poles. Recruits additional proteins to the dynein complex at SPBs. This is Nuclear distribution protein PAC1-1 from Uncinocarpus reesii (strain UAMH 1704).